We begin with the raw amino-acid sequence, 81 residues long: ATP synthase subunit c, chloroplastic (81 aa).

Helical transmembrane passes span 3 to 23 (PLISAASVIAAGLAVGLASIG) and 57 to 77 (LAFMEALTIYGLVVALALLFA).

This sequence belongs to the ATPase C chain family. As to quaternary structure, F-type ATPases have 2 components, F(1) - the catalytic core - and F(0) - the membrane proton channel. F(1) has five subunits: alpha(3), beta(3), gamma(1), delta(1), epsilon(1). F(0) has four main subunits: a(1), b(1), b'(1) and c(10-14). The alpha and beta chains form an alternating ring which encloses part of the gamma chain. F(1) is attached to F(0) by a central stalk formed by the gamma and epsilon chains, while a peripheral stalk is formed by the delta, b and b' chains.

The protein localises to the plastid. Its subcellular location is the chloroplast thylakoid membrane. Its function is as follows. F(1)F(0) ATP synthase produces ATP from ADP in the presence of a proton or sodium gradient. F-type ATPases consist of two structural domains, F(1) containing the extramembraneous catalytic core and F(0) containing the membrane proton channel, linked together by a central stalk and a peripheral stalk. During catalysis, ATP synthesis in the catalytic domain of F(1) is coupled via a rotary mechanism of the central stalk subunits to proton translocation. In terms of biological role, key component of the F(0) channel; it plays a direct role in translocation across the membrane. A homomeric c-ring of between 10-14 subunits forms the central stalk rotor element with the F(1) delta and epsilon subunits. The chain is ATP synthase subunit c, chloroplastic from Ipomoea purpurea (Common morning glory).